The sequence spans 385 residues: UPF0284 protein PMM0439 (385 aa).

Belongs to the UPF0284 family.

In Prochlorococcus marinus subsp. pastoris (strain CCMP1986 / NIES-2087 / MED4), this protein is UPF0284 protein PMM0439.